A 515-amino-acid chain; its full sequence is MSQITLIILVLAIGFSCTKSHPINSTRDGEDSGTDLKNLLTEPANTTYATNSTLTRKELNSTIQPERNDEGSAIRKIMASKKDENITGQSEINTSAKSQPINSTRDGEDSGTDLKNLLTEPANTTYATNSTLTRKELNSSIPPERNDEGSAIRKIMASKKDEIITGQSEINTIAKSQPINSTRDGEDSGTDLKNLLTEPANTTYATNSTLTRKELNSSIPPERNDEGSAIRKIMASKKDEIITGQSEINTIAKSQPINSTRDGEDSGTDLKNLLTELANTTYLTNSTLTRKELNSTIQPERNDEGSAIRKIMASKKDENITGQSEINTSAKSQPINSTRDGEDSGTDLKNLLTDPANTTYATNSTLTRKELNSTIQPERNDETSAIRKIMASRKDENVTGQSEFNISTNSNLNTTTHHEDAVVSPTEKVYVPNNASSAELNVSSTIQPKEADVTTSSANDIKKPAFPYCIILITFQIVTVGMIIYLVFRTMRKPCQSERAIPLNSFGFGNNSSYE.

Positions 1–20 (MSQITLIILVLAIGFSCTKS) are cleaved as a signal peptide. Residues 21–467 (HPINSTRDGE…ANDIKKPAFP (447 aa)) lie on the Extracellular side of the membrane. N24, N45, N51, N60, N85, N93, N102, N123, N129, N138, N180, N201, N207, N216, N258, N279, N285, N294, N319, N327, N336, N357, N363, N372, N397, N405, N413, N434, and N441 each carry an N-linked (GlcNAc...) asparagine; by host glycan. The tract at residues 80-114 (SKKDENITGQSEINTSAKSQPINSTRDGEDSGTDL) is disordered. Positions 86–104 (ITGQSEINTSAKSQPINST) are enriched in polar residues. Residues 314 to 358 (SKKDENITGQSEINTSAKSQPINSTRDGEDSGTDLKNLLTDPANT) form a disordered region. The span at 320–338 (ITGQSEINTSAKSQPINST) shows a compositional bias: polar residues. Residues 393–413 (RKDENVTGQSEFNISTNSNLN) form a disordered region. A helical transmembrane segment spans residues 468–488 (YCIILITFQIVTVGMIIYLVF). Over 489 to 515 (RTMRKPCQSERAIPLNSFGFGNNSSYE) the chain is Cytoplasmic.

It belongs to the polydnaviridae Glc1.8 protein family.

Its subcellular location is the host membrane. In terms of biological role, involved in suppression of the insect cellular immune response. Inhibits host hemocyte adhesion and phagocytosis. This is Mucin-like protein Glc1.8b (O16) from Microplitis demolitor (Parasitoid wasp).